A 635-amino-acid chain; its full sequence is Putative adagio-like protein 2 (635 aa).

A compositionally biased stretch (acidic residues) spans 1 to 25; sequence MEWDSDSEGSGDEEEEEEEEEEEGV. The segment at 1-32 is disordered; it reads MEWDSDSEGSGDEEEEEEEEEEEGVEVGGGGD. One can recognise a PAS domain in the interval 44–123; sequence ALAIEGVLGA…TDIRRCLEEG (80 aa). Cys-91 is modified (S-4a-FMN cysteine). The region spanning 209-255 is the F-box domain; that stretch reads SDLFLLSDEVLCQKILSRLSPRDIASVNSVCKRLYHLTRNDDLWRMV. Kelch repeat units follow at residues 371–421, 423–474, 476–530, and 542–594; these read RLVL…TLDG, KLVV…VYDG, KILM…PPPR, and RILI…VVGG.

Belongs to the ADAGIO family. In terms of processing, FMN binds covalently to cysteine after exposure to blue light and is reversed in the dark.

The protein localises to the nucleus. Its pathway is protein modification; protein ubiquitination. Functionally, component of an E3 ubiquitin ligase complex that plays a central role in blue light-dependent circadian cycles. Acts as a blue light photoreceptor, due to the presence of FMN, that mediates light-regulated protein degradation of critical clock components by targeting them to the proteasome complex. In Oryza sativa subsp. japonica (Rice), this protein is Putative adagio-like protein 2.